Here is a 211-residue protein sequence, read N- to C-terminus: Protein-L-isoaspartate O-methyltransferase (211 aa).

Residue Ser-60 is part of the active site.

This sequence belongs to the methyltransferase superfamily. L-isoaspartyl/D-aspartyl protein methyltransferase family.

Its subcellular location is the cytoplasm. The enzyme catalyses [protein]-L-isoaspartate + S-adenosyl-L-methionine = [protein]-L-isoaspartate alpha-methyl ester + S-adenosyl-L-homocysteine. Functionally, catalyzes the methyl esterification of L-isoaspartyl residues in peptides and proteins that result from spontaneous decomposition of normal L-aspartyl and L-asparaginyl residues. It plays a role in the repair and/or degradation of damaged proteins. This Ectopseudomonas mendocina (strain ymp) (Pseudomonas mendocina) protein is Protein-L-isoaspartate O-methyltransferase.